The chain runs to 229 residues: Orotidine 5'-phosphate decarboxylase (229 aa).

Substrate is bound by residues aspartate 11, lysine 33, 61–70, threonine 116, arginine 179, glutamine 188, glycine 208, and arginine 209; that span reads DMKLFDISAT. Lysine 63 acts as the Proton donor in catalysis.

This sequence belongs to the OMP decarboxylase family. Type 1 subfamily. Homodimer.

It carries out the reaction orotidine 5'-phosphate + H(+) = UMP + CO2. The protein operates within pyrimidine metabolism; UMP biosynthesis via de novo pathway; UMP from orotate: step 2/2. Catalyzes the decarboxylation of orotidine 5'-monophosphate (OMP) to uridine 5'-monophosphate (UMP). This is Orotidine 5'-phosphate decarboxylase from Jannaschia sp. (strain CCS1).